A 272-amino-acid chain; its full sequence is MLRVAGRRLFSVSQRSSTATSFVVSRDHTLSDGGGDSSSAPRSLPSADLSSYHRSLIRGFSSQVLAQGNEIGFGSEVPATVEAVKTPNSKIVYDDHNHERYPPGDPSKRAFAYFVLSGGRFVYASVLRLLVLKLIVSMSASKDVLALASLEVDLGSIEPGTTVTVKWRGKPVFIRRRTEDDIKLANSVDVGSLRDPQEDSVRVKNPEWLVVVGVCTHLGCIPLPNAGDYGGWFCPCHGSHYDISGRIRKGPAPYNLEVPTYSFLEENKLLIG.

A mitochondrion-targeting transit peptide spans Met1–Phe60. Residues Asp27 to Ser46 form a disordered region. At Ser61–Arg109 the chain is on the mitochondrial matrix side. Residues Ala110–Leu132 form a helical membrane-spanning segment. Residues Lys133–Gly272 lie on the Mitochondrial intermembrane side of the membrane. One can recognise a Rieske domain in the interval Val201 to Leu270. Positions 215, 217, 234, and 237 each coordinate [2Fe-2S] cluster. The cysteines at positions 220 and 236 are disulfide-linked.

Belongs to the Rieske iron-sulfur protein family. In terms of assembly, component of the ubiquinol-cytochrome c oxidoreductase (cytochrome b-c1 complex, complex III, CIII), a multisubunit enzyme composed of 10 subunits. The complex is composed of 3 respiratory subunits cytochrome b (MT-CYB), cytochrome c1 (CYC1-1 or CYC1-2) and Rieske protein (UCR1-1 or UCR1-2), 2 core protein subunits MPPalpha1 (or MPPalpha2) and MPPB, and 5 low-molecular weight protein subunits QCR7-1 (or QCR7-2), UCRQ-1 (or UCRQ-2), QCR9, UCRY and probably QCR6-1 (or QCR6-2). The complex exists as an obligatory dimer and forms supercomplexes (SCs) in the inner mitochondrial membrane with NADH-ubiquinone oxidoreductase (complex I, CI), resulting in different assemblies (supercomplexes SCI(1)III(2) and SCI(2)III(4)). [2Fe-2S] cluster serves as cofactor.

The protein localises to the mitochondrion inner membrane. The enzyme catalyses a quinol + 2 Fe(III)-[cytochrome c](out) = a quinone + 2 Fe(II)-[cytochrome c](out) + 2 H(+)(out). Component of the ubiquinol-cytochrome c oxidoreductase, a multisubunit transmembrane complex that is part of the mitochondrial electron transport chain which drives oxidative phosphorylation. The respiratory chain contains 3 multisubunit complexes succinate dehydrogenase (complex II, CII), ubiquinol-cytochrome c oxidoreductase (cytochrome b-c1 complex, complex III, CIII) and cytochrome c oxidase (complex IV, CIV), that cooperate to transfer electrons derived from NADH and succinate to molecular oxygen, creating an electrochemical gradient over the inner membrane that drives transmembrane transport and the ATP synthase. The cytochrome b-c1 complex catalyzes electron transfer from ubiquinol to cytochrome c, linking this redox reaction to translocation of protons across the mitochondrial inner membrane, with protons being carried across the membrane as hydrogens on the quinol. In the process called Q cycle, 2 protons are consumed from the matrix, 4 protons are released into the intermembrane space and 2 electrons are passed to cytochrome c. The Rieske protein is a catalytic core subunit containing a [2Fe-2S] iron-sulfur cluster. It cycles between 2 conformational states during catalysis to transfer electrons from the quinol bound in the Q(0) site in cytochrome b to cytochrome c1. The sequence is that of Cytochrome b-c1 complex subunit Rieske-1, mitochondrial from Arabidopsis thaliana (Mouse-ear cress).